Reading from the N-terminus, the 431-residue chain is MAPIQYIVEGGHRLSGSIEPSGNKNSALPIIAAALLTEHPVTLENVPRIRDTETLVELIRSVGAAAEWTARNTLHIHAKSIRAADLDPELCVRIRASILLAGPLLARCGEVMLPPPGGDVIGRRRLDTHVLALEQLGAKVTATDRLEFRAPKLAGADVFLDEPSVTATENALVAAVAADGVTYLRNAASEPHVQDLANFLVALGAKIEGIGTNTMIIHGPATLGEATYRIQPDHIEVGSLIGLAAVTRSPLRIVRAGVEHLRSIRMGFERLGIVCRVEGDDLIVPSNQTLKIQDDFGGHVPKLEDQPWPAFPADLMSIAIVTATQCEGVILMFEKMFESRMFFVDKLIAMGARIVLCDPHRAIIAGPSRLRGAPMTSPDIRAGMAMLLAAVCAEGTSTINNADQIERGYERIEERLNALGAKIKRVPERKS.

A phosphoenolpyruvate-binding site is contributed by lysine 24–asparagine 25. Arginine 95 lines the UDP-N-acetyl-alpha-D-glucosamine pocket. Aspartate 119 serves as the catalytic Proton donor. Positions 314 and 336 each coordinate UDP-N-acetyl-alpha-D-glucosamine.

The protein belongs to the EPSP synthase family. MurA subfamily.

Its subcellular location is the cytoplasm. The catalysed reaction is phosphoenolpyruvate + UDP-N-acetyl-alpha-D-glucosamine = UDP-N-acetyl-3-O-(1-carboxyvinyl)-alpha-D-glucosamine + phosphate. Its pathway is cell wall biogenesis; peptidoglycan biosynthesis. Functionally, cell wall formation. Adds enolpyruvyl to UDP-N-acetylglucosamine. The polypeptide is UDP-N-acetylglucosamine 1-carboxyvinyltransferase (Bradyrhizobium diazoefficiens (strain JCM 10833 / BCRC 13528 / IAM 13628 / NBRC 14792 / USDA 110)).